A 470-amino-acid chain; its full sequence is Glutamate--tRNA ligase (470 aa).

Residues P12 to G22 carry the 'HIGH' region motif. Zn(2+) contacts are provided by C103, C105, C125, and D127. The short motif at K236–R240 is the 'KMSKS' region element. K239 is a binding site for ATP.

It belongs to the class-I aminoacyl-tRNA synthetase family. Glutamate--tRNA ligase type 1 subfamily. Monomer. Zn(2+) serves as cofactor.

It localises to the cytoplasm. It catalyses the reaction tRNA(Glu) + L-glutamate + ATP = L-glutamyl-tRNA(Glu) + AMP + diphosphate. Its function is as follows. Catalyzes the attachment of glutamate to tRNA(Glu) in a two-step reaction: glutamate is first activated by ATP to form Glu-AMP and then transferred to the acceptor end of tRNA(Glu). This chain is Glutamate--tRNA ligase, found in Frankia alni (strain DSM 45986 / CECT 9034 / ACN14a).